Reading from the N-terminus, the 89-residue chain is Small ribosomal subunit protein uS17 (89 aa).

It belongs to the universal ribosomal protein uS17 family. As to quaternary structure, part of the 30S ribosomal subunit.

Its function is as follows. One of the primary rRNA binding proteins, it binds specifically to the 5'-end of 16S ribosomal RNA. This Chlorobium phaeobacteroides (strain BS1) protein is Small ribosomal subunit protein uS17.